A 58-amino-acid polypeptide reads, in one-letter code: Ribosome modulation factor (58 aa).

Residues 1 to 14 (MKRQKRDKLTRAHS) show a composition bias toward basic residues. The interval 1-25 (MKRQKRDKLTRAHSKGYQAGISGRS) is disordered.

Belongs to the ribosome modulation factor family.

The protein localises to the cytoplasm. During stationary phase, converts 70S ribosomes to an inactive dimeric form (100S ribosomes). This is Ribosome modulation factor from Alteromonas naphthalenivorans.